Consider the following 195-residue polypeptide: Large ribosomal subunit protein uL5 (195 aa).

The protein belongs to the universal ribosomal protein uL5 family. Part of the 50S ribosomal subunit; part of the 5S rRNA/L5/L18/L25 subcomplex. Contacts the 5S rRNA and the P site tRNA. Forms a bridge to the 30S subunit in the 70S ribosome.

This is one of the proteins that bind and probably mediate the attachment of the 5S RNA into the large ribosomal subunit, where it forms part of the central protuberance. In the 70S ribosome it contacts protein S13 of the 30S subunit (bridge B1b), connecting the 2 subunits; this bridge is implicated in subunit movement. Contacts the P site tRNA; the 5S rRNA and some of its associated proteins might help stabilize positioning of ribosome-bound tRNAs. The polypeptide is Large ribosomal subunit protein uL5 (Pelodictyon phaeoclathratiforme (strain DSM 5477 / BU-1)).